The following is a 391-amino-acid chain: Histidinol-phosphate aminotransferase (391 aa).

Lys-245 is modified (N6-(pyridoxal phosphate)lysine).

The protein belongs to the class-II pyridoxal-phosphate-dependent aminotransferase family. Histidinol-phosphate aminotransferase subfamily. As to quaternary structure, homodimer. It depends on pyridoxal 5'-phosphate as a cofactor.

It catalyses the reaction L-histidinol phosphate + 2-oxoglutarate = 3-(imidazol-4-yl)-2-oxopropyl phosphate + L-glutamate. Its pathway is amino-acid biosynthesis; L-histidine biosynthesis; L-histidine from 5-phospho-alpha-D-ribose 1-diphosphate: step 7/9. This Bifidobacterium adolescentis (strain ATCC 15703 / DSM 20083 / NCTC 11814 / E194a) protein is Histidinol-phosphate aminotransferase.